Reading from the N-terminus, the 94-residue chain is Putative pterin-4-alpha-carbinolamine dehydratase (94 aa).

The protein belongs to the pterin-4-alpha-carbinolamine dehydratase family.

The catalysed reaction is (4aS,6R)-4a-hydroxy-L-erythro-5,6,7,8-tetrahydrobiopterin = (6R)-L-erythro-6,7-dihydrobiopterin + H2O. This chain is Putative pterin-4-alpha-carbinolamine dehydratase, found in Caulobacter vibrioides (strain ATCC 19089 / CIP 103742 / CB 15) (Caulobacter crescentus).